The following is an 89-amino-acid chain: Small ribosomal subunit protein uS17 (89 aa).

The protein belongs to the universal ribosomal protein uS17 family. Part of the 30S ribosomal subunit.

Its function is as follows. One of the primary rRNA binding proteins, it binds specifically to the 5'-end of 16S ribosomal RNA. This Leptospira borgpetersenii serovar Hardjo-bovis (strain JB197) protein is Small ribosomal subunit protein uS17.